The chain runs to 129 residues: KIYKRCELAAAMKRYGLDNYRGYSLGNWVCAARYESNYNTQATNRNSNGSTDYGILQINSRWWCNDGRTPGTKNLCHISCSALMGADIAPSVRCAKRIVSDGDGMNAWVAWRKHCKGTDVSTWIKDCKL.

The region spanning 1-129 (KIYKRCELAA…VSTWIKDCKL (129 aa)) is the C-type lysozyme domain. 4 disulfide bridges follow: Cys6-Cys127, Cys30-Cys115, Cys64-Cys80, and Cys76-Cys94. Active-site residues include Glu35 and Asp52.

This sequence belongs to the glycosyl hydrolase 22 family. As to quaternary structure, monomer.

The protein localises to the secreted. The enzyme catalyses Hydrolysis of (1-&gt;4)-beta-linkages between N-acetylmuramic acid and N-acetyl-D-glucosamine residues in a peptidoglycan and between N-acetyl-D-glucosamine residues in chitodextrins.. In terms of biological role, lysozymes have primarily a bacteriolytic function; those in tissues and body fluids are associated with the monocyte-macrophage system and enhance the activity of immunoagents. This Ortalis vetula (Plain chachalaca) protein is Lysozyme C (LYZ).